The primary structure comprises 341 residues: Anthranilate phosphoribosyltransferase (341 aa).

Residues Gly-83, 86 to 87 (GD), Thr-91, 93 to 96 (NIST), 111 to 119 (KHGNRGVSS), and Ser-123 each bind 5-phospho-alpha-D-ribose 1-diphosphate. Position 83 (Gly-83) interacts with anthranilate. Residue Ser-95 participates in Mg(2+) binding. Asn-114 is an anthranilate binding site. An anthranilate-binding site is contributed by Arg-169. Residues Asp-228 and Glu-229 each coordinate Mg(2+).

Belongs to the anthranilate phosphoribosyltransferase family. In terms of assembly, homodimer. The cofactor is Mg(2+).

The enzyme catalyses N-(5-phospho-beta-D-ribosyl)anthranilate + diphosphate = 5-phospho-alpha-D-ribose 1-diphosphate + anthranilate. It functions in the pathway amino-acid biosynthesis; L-tryptophan biosynthesis; L-tryptophan from chorismate: step 2/5. Its function is as follows. Catalyzes the transfer of the phosphoribosyl group of 5-phosphorylribose-1-pyrophosphate (PRPP) to anthranilate to yield N-(5'-phosphoribosyl)-anthranilate (PRA). The chain is Anthranilate phosphoribosyltransferase from Cupriavidus necator (strain ATCC 17699 / DSM 428 / KCTC 22496 / NCIMB 10442 / H16 / Stanier 337) (Ralstonia eutropha).